Here is a 411-residue protein sequence, read N- to C-terminus: CinA-like protein (411 aa).

It belongs to the CinA family.

The chain is CinA-like protein from Dictyoglomus turgidum (strain DSM 6724 / Z-1310).